A 1070-amino-acid chain; its full sequence is Ubiquitin-protein ligase E3B (1070 aa).

Position 1 is an N-acetylmethionine (M1). Residues 29 to 58 (RERSAVTIQALVRSFLCRRRLHRDIRKEID) enclose the IQ domain. S421 carries the phosphoserine modification. Positions 704–1070 (SQHAMKGVIR…ISMNTGFELS (367 aa)) constitute an HECT domain. The active-site Glycyl thioester intermediate is the C1038.

Widely expressed. High expression is observed in developing central nervous system.

It localises to the postsynaptic density. It carries out the reaction S-ubiquitinyl-[E2 ubiquitin-conjugating enzyme]-L-cysteine + [acceptor protein]-L-lysine = [E2 ubiquitin-conjugating enzyme]-L-cysteine + N(6)-ubiquitinyl-[acceptor protein]-L-lysine.. It participates in protein modification; protein ubiquitination. Its function is as follows. E3 ubiquitin-protein ligase which accepts ubiquitin from an E2 ubiquitin-conjugating enzyme in the form of a thioester and then directly transfers the ubiquitin to targeted substrates. Ubiquitinates BCKDK and targets it for degradation, thereby regulating various metabolic processes. Involved in the positive regulation of neurite branching in hippocampal neurons and the control of neuronal spine number and morphology, through the ubiquitination of PPP3CC. The protein is Ubiquitin-protein ligase E3B (Ube3b) of Mus musculus (Mouse).